The sequence spans 168 residues: MLPASLLRHPGLRRLMLQARTYAEAAAAPAPAAGPGQMSFTFASPTQVFFDSANVKQVDVPTLTGAFGILASHVPTLQVLRPGLVVVHTEDGTTTKYFVSSGSVTVNADSSVQLLAEEAVTLDMLDLGAARANLEKAQSELSGAADEAARAEIQIRIEANEALVKALE.

The N-terminal 22 residues, 1–22 (MLPASLLRHPGLRRLMLQARTY), are a transit peptide targeting the mitochondrion. Residues lysine 136 and lysine 165 each carry the N6-acetyllysine; alternate modification. An N6-succinyllysine; alternate mark is found at lysine 136 and lysine 165.

This sequence belongs to the ATPase epsilon chain family. Component of the ATP synthase complex composed at least of ATP5F1A/subunit alpha, ATP5F1B/subunit beta, ATP5MC1/subunit c (homooctomer), MT-ATP6/subunit a, MT-ATP8/subunit 8, ATP5ME/subunit e, ATP5MF/subunit f, ATP5MG/subunit g, ATP5MK/subunit k, ATP5MJ/subunit j, ATP5F1C/subunit gamma, ATP5F1D/subunit delta, ATP5F1E/subunit epsilon, ATP5PF/subunit F6, ATP5PB/subunit b, ATP5PD/subunit d, ATP5PO/subunit OSCP. ATP synthase complex consists of a soluble F(1) head domain (subunits alpha(3) and beta(3)) - the catalytic core - and a membrane F(0) domain - the membrane proton channel (subunits c, a, 8, e, f, g, k and j). These two domains are linked by a central stalk (subunits gamma, delta, and epsilon) rotating inside the F1 region and a stationary peripheral stalk (subunits F6, b, d, and OSCP). Component of a complex composed at least by ATPIF1, ATP5F1A, ATP5F1B, ATP5F1C AND ATP5F1E.

The protein resides in the mitochondrion. It localises to the mitochondrion inner membrane. Its function is as follows. Subunit delta, of the mitochondrial membrane ATP synthase complex (F(1)F(0) ATP synthase or Complex V) that produces ATP from ADP in the presence of a proton gradient across the membrane which is generated by electron transport complexes of the respiratory chain. ATP synthase complex consist of a soluble F(1) head domain - the catalytic core - and a membrane F(1) domain - the membrane proton channel. These two domains are linked by a central stalk rotating inside the F(1) region and a stationary peripheral stalk. During catalysis, ATP synthesis in the catalytic domain of F(1) is coupled via a rotary mechanism of the central stalk subunits to proton translocation. In vivo, can only synthesize ATP although its ATP hydrolase activity can be activated artificially in vitro. With the central stalk subunit gamma, is essential for the biogenesis of F(1) catalytic part of the ATP synthase complex namely in the formation of F1 assembly intermediate. The polypeptide is ATP synthase F(1) complex subunit delta, mitochondrial (Mus musculus (Mouse)).